A 4467-amino-acid chain; its full sequence is Protocadherin-like protein (4467 aa).

The first 22 residues, methionine 1–threonine 22, serve as a signal peptide directing secretion. 28 consecutive Cadherin domains span residues alanine 23–phenylalanine 128, proline 129–phenylalanine 238, glutamate 239–phenylalanine 350, glutamine 351–phenylalanine 455, asparagine 459–phenylalanine 566, serine 567–phenylalanine 664, lysine 665–phenylalanine 764, serine 765–phenylalanine 884, serine 885–phenylalanine 994, glutamate 1092–phenylalanine 1197, serine 1290–phenylalanine 1395, serine 1396–phenylalanine 1499, glycine 1495–phenylalanine 1597, serine 1601–arginine 1701, threonine 1793–phenylalanine 1891, serine 1892–phenylalanine 1992, glutamate 1993–phenylalanine 2100, leucine 2101–phenylalanine 2202, threonine 2203–phenylalanine 2312, leucine 2313–phenylalanine 2423, proline 2425–phenylalanine 2529, lysine 2530–phenylalanine 2639, proline 2640–phenylalanine 2746, aspartate 2747–phenylalanine 2849, proline 2850–phenylalanine 2954, asparagine 2955–phenylalanine 3062, valine 3063–phenylalanine 3170, and arginine 3173–aspartate 3288. Residues alanine 23–alanine 4258 are Extracellular-facing. The region spanning proline 3551–glutamine 3589 is the EGF-like 1 domain. Cystine bridges form between cysteine 3555-cysteine 3567, cysteine 3561-cysteine 3577, cysteine 3579-cysteine 3588, cysteine 3762-cysteine 3788, cysteine 3794-cysteine 3803, cysteine 3797-cysteine 3812, and cysteine 3814-cysteine 3823. The Laminin G-like 1 domain maps to serine 3590–cysteine 3788. The 35-residue stretch at leucine 3790–aspartate 3824 folds into the EGF-like 2 domain. Positions valine 3842 to serine 4096 constitute a Laminin G-like 2 domain. Residues isoleucine 4089–valine 4118 are disordered. The span at serine 4096–valine 4118 shows a compositional bias: gly residues. The EGF-like 3 domain occupies proline 4206–glutamate 4238. 3 disulfides stabilise this stretch: cysteine 4207-cysteine 4218, cysteine 4212-cysteine 4226, and cysteine 4228-cysteine 4237. The helical transmembrane segment at valine 4259 to leucine 4279 threads the bilayer. Topologically, residues lysine 4280–glutamate 4467 are cytoplasmic. Residues aspartate 4424–glutamate 4445 are disordered.

In terms of tissue distribution, component of the acid-insoluble organic matrix of the aragonitic skeleton (at protein level).

Its subcellular location is the membrane. This Acropora millepora (Staghorn coral) protein is Protocadherin-like protein.